A 691-amino-acid chain; its full sequence is Elongation factor G (691 aa).

Residues 8-282 (ERVRNIGIAA…AVVDYLPAPV (275 aa)) form the tr-type G domain. GTP-binding positions include 17 to 24 (AHIDAGKT), 81 to 85 (DTPGH), and 135 to 138 (NKMD).

The protein belongs to the TRAFAC class translation factor GTPase superfamily. Classic translation factor GTPase family. EF-G/EF-2 subfamily.

The protein resides in the cytoplasm. In terms of biological role, catalyzes the GTP-dependent ribosomal translocation step during translation elongation. During this step, the ribosome changes from the pre-translocational (PRE) to the post-translocational (POST) state as the newly formed A-site-bound peptidyl-tRNA and P-site-bound deacylated tRNA move to the P and E sites, respectively. Catalyzes the coordinated movement of the two tRNA molecules, the mRNA and conformational changes in the ribosome. This chain is Elongation factor G, found in Prochlorococcus marinus (strain MIT 9312).